A 262-amino-acid chain; its full sequence is Glucosamine-6-phosphate deaminase (262 aa).

The Proton acceptor; for enolization step role is filled by Asp63. Asn129 (for ring-opening step) is an active-site residue. His131 (proton acceptor; for ring-opening step) is an active-site residue. Glu136 acts as the For ring-opening step in catalysis.

This sequence belongs to the glucosamine/galactosamine-6-phosphate isomerase family. NagB subfamily.

It carries out the reaction alpha-D-glucosamine 6-phosphate + H2O = beta-D-fructose 6-phosphate + NH4(+). It participates in amino-sugar metabolism; N-acetylneuraminate degradation; D-fructose 6-phosphate from N-acetylneuraminate: step 5/5. Catalyzes the reversible isomerization-deamination of glucosamine 6-phosphate (GlcN6P) to form fructose 6-phosphate (Fru6P) and ammonium ion. The polypeptide is Glucosamine-6-phosphate deaminase (Bacillus cereus (strain G9842)).